We begin with the raw amino-acid sequence, 80 residues long: Cell division activator CedA (80 aa).

The protein belongs to the CedA family.

Its function is as follows. Activates the cell division inhibited by chromosomal DNA over-replication. The protein is Cell division activator CedA of Salmonella arizonae (strain ATCC BAA-731 / CDC346-86 / RSK2980).